The primary structure comprises 293 residues: Lymphocyte antigen 6 complex locus protein G6f (293 aa).

Residues 1–19 form the signal peptide; it reads MAMVVFLLLYLCGHPQAAA. In terms of domain architecture, Ig-like V-type spans 20 to 124; it reads DNIQTLYVPS…HKYQNWRVYD (105 aa). The Extracellular portion of the chain corresponds to 20-237; it reads DNIQTLYVPS…APLPSWDVSW (218 aa). A disulfide bond links Cys-37 and Cys-108. The N-linked (GlcNAc...) asparagine glycan is linked to Asn-90. Residues 238–258 traverse the membrane as a helical segment; sequence ILMLLFAAGQGVTIIALSIVI. Residues 259–293 lie on the Cytoplasmic side of the membrane; sequence WRHQRAQGTQDREPSIPHFKPEVQVYENIHLARLR. Tyr-284 bears the Phosphotyrosine mark.

In terms of assembly, homodimer; disulfide-linked. Interacts with GRB2 and GRB7 in a phosphorylation-dependent manner. In terms of processing, N-glycosylated.

Its subcellular location is the cell membrane. Its function is as follows. May play a role in the downstream signal transduction pathways involving GRB2 and GRB7. The chain is Lymphocyte antigen 6 complex locus protein G6f (Ly6g6f) from Rattus norvegicus (Rat).